Consider the following 388-residue polypeptide: Chorismate synthase (388 aa).

Arg39 and Arg45 together coordinate NADP(+). FMN contacts are provided by residues 130–132 (RSS), 251–252 (NA), Gly296, 311–315 (KPIPT), and Arg337.

It belongs to the chorismate synthase family. In terms of assembly, homotetramer. FMNH2 is required as a cofactor.

The enzyme catalyses 5-O-(1-carboxyvinyl)-3-phosphoshikimate = chorismate + phosphate. It participates in metabolic intermediate biosynthesis; chorismate biosynthesis; chorismate from D-erythrose 4-phosphate and phosphoenolpyruvate: step 7/7. Functionally, catalyzes the anti-1,4-elimination of the C-3 phosphate and the C-6 proR hydrogen from 5-enolpyruvylshikimate-3-phosphate (EPSP) to yield chorismate, which is the branch point compound that serves as the starting substrate for the three terminal pathways of aromatic amino acid biosynthesis. This reaction introduces a second double bond into the aromatic ring system. The protein is Chorismate synthase of Streptococcus pyogenes serotype M2 (strain MGAS10270).